We begin with the raw amino-acid sequence, 765 residues long: 5-methyltetrahydropteroyltriglutamate--homocysteine methyltransferase (765 aa).

5-methyltetrahydropteroyltri-L-glutamate is bound by residues 18 to 21 and K114; that span reads REWK. Residues 437-439 and E490 each bind L-homocysteine; that span reads IGS. L-methionine contacts are provided by residues 437 to 439 and E490; that span reads IGS. A 5-methyltetrahydropteroyltri-L-glutamate-binding site is contributed by W567. D605 is a binding site for L-homocysteine. D605 lines the L-methionine pocket. A 5-methyltetrahydropteroyltri-L-glutamate-binding site is contributed by E611. Zn(2+)-binding residues include H647, C649, and E671. Residue H700 is the Proton donor of the active site. A Zn(2+)-binding site is contributed by C732.

Belongs to the vitamin-B12 independent methionine synthase family. Requires Zn(2+) as cofactor.

The enzyme catalyses 5-methyltetrahydropteroyltri-L-glutamate + L-homocysteine = tetrahydropteroyltri-L-glutamate + L-methionine. It functions in the pathway amino-acid biosynthesis; L-methionine biosynthesis via de novo pathway; L-methionine from L-homocysteine (MetE route): step 1/1. Its function is as follows. Catalyzes the transfer of a methyl group from 5-methyltetrahydrofolate to homocysteine resulting in methionine formation. The protein is 5-methyltetrahydropteroyltriglutamate--homocysteine methyltransferase of Listeria welshimeri serovar 6b (strain ATCC 35897 / DSM 20650 / CCUG 15529 / CIP 8149 / NCTC 11857 / SLCC 5334 / V8).